We begin with the raw amino-acid sequence, 529 residues long: GTPase Obg (529 aa).

Positions 2–159 (PTFVDRVVLH…LDAVLELKTV (158 aa)) constitute an Obg domain. The disordered stretch occupies residues 62–86 (FHPHQRASRGRPGQGSNRHGADGAD). The OBG-type G domain maps to 160 to 332 (ADVALVGFPS…LSLALADLVA (173 aa)). Residues 166–173 (GFPSAGKS), 191–195 (FTTLV), 213–216 (DVPG), 284–287 (NKID), and 313–315 (STA) contribute to the GTP site. 2 residues coordinate Mg(2+): S173 and T193. The OCT domain occupies 350–427 (PRAVNEPDFT…IGEVTFDWEP (78 aa)). Disordered stretches follow at residues 434 to 494 (LGNG…DRLR) and 506 to 529 (ARRA…EEEG). Low complexity-rich tracts occupy residues 461-472 (AGTAASGAAPSP) and 508-520 (RAAA…VRGE).

Belongs to the TRAFAC class OBG-HflX-like GTPase superfamily. OBG GTPase family. Monomer. Mg(2+) serves as cofactor.

The protein resides in the cytoplasm. An essential GTPase which binds GTP, GDP and possibly (p)ppGpp with moderate affinity, with high nucleotide exchange rates and a fairly low GTP hydrolysis rate. Plays a role in control of the cell cycle, stress response, ribosome biogenesis and in those bacteria that undergo differentiation, in morphogenesis control. The sequence is that of GTPase Obg from Frankia casuarinae (strain DSM 45818 / CECT 9043 / HFP020203 / CcI3).